Here is a 391-residue protein sequence, read N- to C-terminus: Digeranylgeranylglycerophospholipid reductase (391 aa).

The FAD site is built by Gly-13, Glu-32, Cys-43, Ala-44, Gly-46, Arg-97, Ala-121, Asp-277, Gly-289, and Ile-290.

It belongs to the geranylgeranyl reductase family. DGGGPL reductase subfamily. FAD serves as cofactor.

It carries out the reaction a 2,3-bis-O-phytanyl-sn-glycerol 1-phospholipid + 8 oxidized 2[4Fe-4S]-[ferredoxin] = a 2,3-bis-O-(geranylgeranyl)-sn-glycerol 1-phospholipid + 8 reduced 2[4Fe-4S]-[ferredoxin] + 16 H(+). The catalysed reaction is 2,3-bis-O-(phytanyl)-sn-glycerol 1-phosphate + 8 oxidized 2[4Fe-4S]-[ferredoxin] = 2,3-bis-O-(geranylgeranyl)-sn-glycerol 1-phosphate + 8 reduced 2[4Fe-4S]-[ferredoxin] + 16 H(+). It catalyses the reaction a 2,3-bis-O-phytanyl-sn-glycerol 1-phospholipid + 8 A = a 2,3-bis-O-(geranylgeranyl)-sn-glycerol 1-phospholipid + 8 AH2. The enzyme catalyses CDP-2,3-bis-O-(geranylgeranyl)-sn-glycerol + 8 AH2 = CDP-2,3-bis-O-(phytanyl)-sn-glycerol + 8 A. It carries out the reaction archaetidylserine + 8 AH2 = 2,3-bis-O-phytanyl-sn-glycero-3-phospho-L-serine + 8 A. Its pathway is membrane lipid metabolism; glycerophospholipid metabolism. Is involved in the reduction of 2,3-digeranylgeranylglycerophospholipids (unsaturated archaeols) into 2,3-diphytanylglycerophospholipids (saturated archaeols) in the biosynthesis of archaeal membrane lipids. Catalyzes the formation of archaetidic acid (2,3-di-O-phytanyl-sn-glyceryl phosphate) from 2,3-di-O-geranylgeranylglyceryl phosphate (DGGGP) via the hydrogenation of each double bond of the isoprenoid chains. Is also probably able to reduce double bonds of geranyl groups in CDP-2,3-bis-O-(geranylgeranyl)-sn-glycerol and archaetidylserine, thus acting at various stages in the biosynthesis of archaeal membrane lipids. The polypeptide is Digeranylgeranylglycerophospholipid reductase (Methanothrix thermoacetophila (strain DSM 6194 / JCM 14653 / NBRC 101360 / PT) (Methanosaeta thermophila)).